The chain runs to 514 residues: Butyrophilin subfamily 2 member A2 (514 aa).

The signal sequence occupies residues M1–A29. In terms of domain architecture, Ig-like V-type spans Q30–M142. Residues Q30–S244 lie on the Extracellular side of the membrane. N47 and N115 each carry an N-linked (GlcNAc...) asparagine glycan. Cystine bridges form between C52–C126 and C166–C220. Positions P150–E232 constitute an Ig-like C2-type domain. A helical membrane pass occupies residues L245–T265. The Cytoplasmic portion of the chain corresponds to S266–P514. The stretch at I281–R304 forms a coiled coil. In terms of domain architecture, B30.2/SPRY spans A295–A488.

It belongs to the immunoglobulin superfamily. BTN/MOG family. Post-translationally, N-glycosylated. Widely expressed (at protein level). In the thymus, restricted to the corticomedullary junction, but not confined solely to epithelial cells (at protein level). Significant expression on naive B-cells, splenic natural killer cells, dendritic cells and peritoneal macrophages (at protein level). Negligible expression on naive T-cells up-regulated on activated T-cells (at protein level).

The protein localises to the membrane. In terms of biological role, inhibits the proliferation of CD4 and CD8 T-cells activated by anti-CD3 antibodies, T-cell metabolism and IL2 and IFNG secretion. In Mus musculus (Mouse), this protein is Butyrophilin subfamily 2 member A2 (Btn2a2).